We begin with the raw amino-acid sequence, 2271 residues long: Serine-rich adhesin for platelets (2271 aa).

A signal peptide spans 1–89; sequence MSKRQKAFHD…VNMLHDQQAF (89 aa). Residues 90-230 are serine-rich repeat region 1, SRR1; it reads AASDAPLTSE…KTSTTSTSTA (141 aa). The span at 100–111 shows a compositional bias: polar residues; it reads LNTQSETVGNQN. Disordered stretches follow at residues 100–229, 751–791, and 806–2243; these read LNTQ…STST, NSMS…VVST, and SVSA…GLLG. A compositionally biased stretch (low complexity) spans 112 to 128; sequence STTIEASTSTADSTSVT. The segment covering 129-140 has biased composition (polar residues); that stretch reads KNSSSVQTSNSD. The segment covering 150–229 has biased composition (low complexity); sequence VTSTTNSTSN…NKTSTTSTST (80 aa). The segment at 231-751 is non-repeat region (NRR); it reads PVKLRTFSRL…TTFKYEVTRN (521 aa). 3 stretches are compositionally biased toward low complexity: residues 752 to 791, 806 to 1392, and 1402 to 2214; these read SMSD…VVST, SVSA…LSLS, and SNSA…ATSE. The tract at residues 752-2232 is serine-rich repeat region 2, SRR2; that stretch reads SMSDSVSTSG…AQSEKRLPDT (1481 aa). Residues 2229–2233 carry the LPXTG sorting signal motif; it reads LPDTG. Position 2232 is a pentaglycyl murein peptidoglycan amidated threonine (threonine 2232). A propeptide spans 2233 to 2271 (removed by sortase); sequence GDSIKQNGLLGGVMTLLVGLGLMKRKKKKDENDQDDSQA.

Belongs to the serine-rich repeat protein (SRRP) family. In terms of processing, proteolytically cleaved by a metalloprotease. Post-translationally, glycosylated. It is probable that most of the Ser residues in SSR1 and SSR2 are O-GlcNAcylated. Sequential glycosylation by sugar transferases are able to generate complex sugar polymorphisms.

The protein localises to the secreted. It localises to the cell wall. Its function is as follows. Mediates binding to human platelets, possibly through a receptor-ligand interaction. Probably associated with virulence in endovascular infection. This chain is Serine-rich adhesin for platelets (sraP), found in Staphylococcus aureus (strain Mu50 / ATCC 700699).